The primary structure comprises 623 residues: Chaperone protein DnaK (623 aa).

A Phosphothreonine; by autocatalysis modification is found at Thr-175. The disordered stretch occupies residues Pro-580–Lys-623. The segment covering Asn-591–Gly-604 has biased composition (low complexity). Over residues Asn-605–Lys-623 the composition is skewed to basic and acidic residues.

It belongs to the heat shock protein 70 family.

Functionally, acts as a chaperone. This chain is Chaperone protein DnaK, found in Clostridium botulinum (strain Hall / ATCC 3502 / NCTC 13319 / Type A).